The primary structure comprises 775 residues: uncharacterized protein (775 aa).

The next 5 membrane-spanning stretches (helical) occupy residues 16-36 (KLLI…GVFL), 585-605 (PYIL…VFPL), 625-645 (VMML…LLGI), 655-675 (FYVF…FLAT), and 742-762 (GVLI…FTML).

This sequence to L.lactis phage infection protein (PIP).

It localises to the cell membrane. This is an uncharacterized protein from Bacillus subtilis (strain 168).